We begin with the raw amino-acid sequence, 232 residues long: 7-cyano-7-deazaguanine synthase (232 aa).

8 to 18 (FSGGQDSTTCL) contributes to the ATP binding site. Residues Cys189, Cys198, Cys201, and Cys204 each coordinate Zn(2+).

The protein belongs to the QueC family. Zn(2+) is required as a cofactor.

It carries out the reaction 7-carboxy-7-deazaguanine + NH4(+) + ATP = 7-cyano-7-deazaguanine + ADP + phosphate + H2O + H(+). It functions in the pathway purine metabolism; 7-cyano-7-deazaguanine biosynthesis. Its function is as follows. Catalyzes the ATP-dependent conversion of 7-carboxy-7-deazaguanine (CDG) to 7-cyano-7-deazaguanine (preQ(0)). In Yersinia pseudotuberculosis serotype O:1b (strain IP 31758), this protein is 7-cyano-7-deazaguanine synthase.